The chain runs to 139 residues: Basic phospholipase A2 beta-bungarotoxin A2 chain (139 aa).

The N-terminal stretch at 1–9 (AVCVSLLGA) is a signal peptide. A propeptide spanning residues 10 to 17 (ANIPPHPF) is cleaved from the precursor. Residues tyrosine 45, glycine 47, and glycine 49 each contribute to the Ca(2+) site. Cysteine 46 and cysteine 62 are disulfide-bonded. Histidine 65 is a catalytic residue. Aspartate 66 is a binding site for Ca(2+).

This sequence belongs to the phospholipase A2 family. Group I subfamily. D49 sub-subfamily. Heterodimer; disulfide-linked. The A chains have phospholipase A2 activity and the B chains show homology with the basic protease inhibitors. It depends on Ca(2+) as a cofactor. As to expression, expressed by the venom gland.

The protein resides in the secreted. It catalyses the reaction a 1,2-diacyl-sn-glycero-3-phosphocholine + H2O = a 1-acyl-sn-glycero-3-phosphocholine + a fatty acid + H(+). Functionally, snake venom phospholipase A2 (PLA2) that shows presynaptic neurotoxicity. PLA2 catalyzes the calcium-dependent hydrolysis of the 2-acyl groups in 3-sn-phosphoglycerides. This chain is Basic phospholipase A2 beta-bungarotoxin A2 chain, found in Bungarus candidus (Malayan krait).